Here is a 172-residue protein sequence, read N- to C-terminus: Capsid protein (172 aa).

Residues methionine 1–serine 26 are disordered. Over residues lysine 11–tyrosine 20 the composition is skewed to basic residues.

It belongs to the nanoviridae capsid protein family.

It is found in the virion. The sequence is that of Capsid protein (DNA-S) from Faba bean necrotic yellows virus (isolate Egyptian EV1-93) (FBNYV).